Consider the following 1857-residue polypeptide: Phosphatidylinositol 3-kinase 2 (1857 aa).

Low complexity-rich tracts occupy residues 1–32 (MKMSEGIISPLSLSSESSEQQQAAIRKFSNGS) and 42–55 (NLSVNSSNSGSNNS). Disordered stretches follow at residues 1–61 (MKMS…KSST), 145–313 (TPLN…TNRV), 348–468 (SSSK…NSIR), 481–512 (ISSNGIPSSPGQVSNKDYNNIGNLSNSSGERV), and 530–573 (ESDI…GPNV). A compositionally biased stretch (polar residues) spans 145-155 (TPLNRSRSGSI). Positions 162–269 (NNLTSSSSSS…NNNNNNNSNS (108 aa)) are enriched in low complexity. The span at 270 to 281 (GGSSRMITSKSQ) shows a compositional bias: polar residues. Composition is skewed to low complexity over residues 288–311 (TSNTAATTTTTTTTNTSAPTTPTN) and 352–464 (LLIP…QPSN). A compositionally biased stretch (low complexity) spans 533 to 560 (ISSSPRSIGSPNSIRASISSQLPPSLSS). Residues 561–570 (IGGGGGGGSG) are compositionally biased toward gly residues. The 114-residue stretch at 821–934 (PNKITIMVLL…NQTVELSLTN (114 aa)) folds into the PI3K-RBD domain. The disordered stretch occupies residues 996–1078 (KETNKENKDS…SGSGNGSEQP (83 aa)). Basic and acidic residues predominate over residues 997-1011 (ETNKENKDSNKENKD). Positions 1012–1056 (SSSNNNNNNNNNNNNNNNNNNNNNNNNNNNGNNNGNNSNNNSNSN) are enriched in low complexity. Positions 1099–1271 (VKRLFRVNIA…QPIILLVEFE (173 aa)) constitute a C2 PI3K-type domain. A PIK helical domain is found at 1326 to 1503 (PVGLKKLDLD…GLLLEGYLRS (178 aa)). One can recognise a PI3K/PI4K catalytic domain in the interval 1568 to 1845 (IIDKCRYMDS…NISVALNTKT (278 aa)). Residues 1574–1580 (YMDSKKL) form a G-loop region. The tract at residues 1711-1719 (GIGDRHSDN) is catalytic loop. Positions 1730–1756 (HIDFGHFLGNYKKKYGFKRERAPFIFT) are activation loop.

It belongs to the PI3/PI4-kinase family.

It catalyses the reaction a 1,2-diacyl-sn-glycero-3-phospho-(1D-myo-inositol) + ATP = a 1,2-diacyl-sn-glycero-3-phospho-(1D-myo-inositol-3-phosphate) + ADP + H(+). This Dictyostelium discoideum (Social amoeba) protein is Phosphatidylinositol 3-kinase 2 (pikB).